A 187-amino-acid chain; its full sequence is UPF0340 protein SGO_0411 (187 aa).

The protein belongs to the UPF0340 family.

In Streptococcus gordonii (strain Challis / ATCC 35105 / BCRC 15272 / CH1 / DL1 / V288), this protein is UPF0340 protein SGO_0411.